The following is a 251-amino-acid chain: CDP-diacylglycerol pyrophosphatase (251 aa).

Residues 5-25 (GYFLLAVIVIVAAAGVGYWKF) form a helical membrane-spanning segment.

The protein belongs to the Cdh family.

The protein resides in the cell inner membrane. The catalysed reaction is a CDP-1,2-diacyl-sn-glycerol + H2O = a 1,2-diacyl-sn-glycero-3-phosphate + CMP + 2 H(+). It participates in phospholipid metabolism; CDP-diacylglycerol degradation; phosphatidate from CDP-diacylglycerol: step 1/1. In Salmonella typhi, this protein is CDP-diacylglycerol pyrophosphatase.